A 237-amino-acid polypeptide reads, in one-letter code: Uracil-DNA glycosylase (237 aa).

D77 functions as the Proton acceptor in the catalytic mechanism.

Belongs to the uracil-DNA glycosylase (UDG) superfamily. UNG family.

It localises to the cytoplasm. The enzyme catalyses Hydrolyzes single-stranded DNA or mismatched double-stranded DNA and polynucleotides, releasing free uracil.. Its function is as follows. Excises uracil residues from the DNA which can arise as a result of misincorporation of dUMP residues by DNA polymerase or due to deamination of cytosine. This Acinetobacter baumannii (strain AB307-0294) protein is Uracil-DNA glycosylase.